We begin with the raw amino-acid sequence, 328 residues long: Eukaryotic translation initiation factor 3 subunit I (328 aa).

WD repeat units follow at residues G8–R49, G50–T89, D146–Q185, G191–T230, and G288–K327.

Belongs to the eIF-3 subunit I family. As to quaternary structure, component of the eukaryotic translation initiation factor 3 (eIF-3) complex.

It localises to the cytoplasm. Component of the eukaryotic translation initiation factor 3 (eIF-3) complex, which is involved in protein synthesis of a specialized repertoire of mRNAs and, together with other initiation factors, stimulates binding of mRNA and methionyl-tRNAi to the 40S ribosome. The eIF-3 complex specifically targets and initiates translation of a subset of mRNAs involved in cell proliferation. The chain is Eukaryotic translation initiation factor 3 subunit I (TIF3I1) from Arabidopsis thaliana (Mouse-ear cress).